Reading from the N-terminus, the 467-residue chain is Cruzipain (467 aa).

The signal sequence occupies residues 1-18; sequence MSGWARALLLAAVLVVMA. Residues 19-122 constitute a propeptide, activation peptide; it reads CLVPAATASL…RVPVKVEVVG (104 aa). Intrachain disulfides connect C144–C185, C178–C223, and C277–C325. C147 is a catalytic residue. Residue N169 is glycosylated (N-linked (GlcNAc...) asparagine). H284 is a catalytic residue. N292 is a glycosylation site (N-linked (GlcNAc...) asparagine). N304 is a catalytic residue. Positions 333–355 are disordered; that stretch reads SAVVGGPGPTPEPTTTTTTSAPG. The span at 345–354 shows a compositional bias: low complexity; that stretch reads PTTTTTTSAP. N377 is a glycosylation site (N-linked (GlcNAc...) asparagine).

Belongs to the peptidase C1 family.

It catalyses the reaction Broad endopeptidase specificity similar to that of cathepsin L.. Its activity is regulated as follows. Strongly inhibited by E-64 (L-trans-epoxysuccinylleucylamido(4-guanidino)butane), Leupeptin, and N-alpha-p-tosyl-L-lysine chloromethyl ketone. Hydrolyzes chromogenic peptides at the carboxyl Arg or Lys; requires at least one more amino acid, preferably Arg, Phe, Val or Leu, between the terminal Arg or Lys and the amino-blocking group. Its function is as follows. The cysteine protease may play an important role in the development and differentiation of the parasites at several stages of their life cycle. The sequence is that of Cruzipain from Trypanosoma cruzi.